The chain runs to 245 residues: tRNA pseudouridine synthase A (245 aa).

The active-site Nucleophile is the D52. Y111 lines the substrate pocket.

It belongs to the tRNA pseudouridine synthase TruA family. Homodimer.

The catalysed reaction is uridine(38/39/40) in tRNA = pseudouridine(38/39/40) in tRNA. In terms of biological role, formation of pseudouridine at positions 38, 39 and 40 in the anticodon stem and loop of transfer RNAs. This chain is tRNA pseudouridine synthase A, found in Nitrobacter hamburgensis (strain DSM 10229 / NCIMB 13809 / X14).